We begin with the raw amino-acid sequence, 216 residues long: Ribosomal RNA large subunit methyltransferase E (216 aa).

G60, W62, D80, D96, and D121 together coordinate S-adenosyl-L-methionine. Residue K161 is the Proton acceptor of the active site.

Belongs to the class I-like SAM-binding methyltransferase superfamily. RNA methyltransferase RlmE family.

It is found in the cytoplasm. The catalysed reaction is uridine(2552) in 23S rRNA + S-adenosyl-L-methionine = 2'-O-methyluridine(2552) in 23S rRNA + S-adenosyl-L-homocysteine + H(+). In terms of biological role, specifically methylates the uridine in position 2552 of 23S rRNA at the 2'-O position of the ribose in the fully assembled 50S ribosomal subunit. This Pseudomonas savastanoi pv. phaseolicola (strain 1448A / Race 6) (Pseudomonas syringae pv. phaseolicola (strain 1448A / Race 6)) protein is Ribosomal RNA large subunit methyltransferase E.